Here is a 122-residue protein sequence, read N- to C-terminus: Ribosomal protein eL22-like (122 aa).

Serine 112, serine 118, and serine 120 each carry phosphoserine.

It belongs to the eukaryotic ribosomal protein eL22 family.

This is Ribosomal protein eL22-like (RPL22L1) from Homo sapiens (Human).